The primary structure comprises 359 residues: tRNA/tmRNA (uracil-C(5))-methyltransferase (359 aa).

The S-adenosyl-L-methionine site is built by Gln183, Tyr211, Asn216, Glu232, and Asp292. Cys317 serves as the catalytic Nucleophile. Glu351 (proton acceptor) is an active-site residue.

It belongs to the class I-like SAM-binding methyltransferase superfamily. RNA M5U methyltransferase family. TrmA subfamily.

The catalysed reaction is uridine(54) in tRNA + S-adenosyl-L-methionine = 5-methyluridine(54) in tRNA + S-adenosyl-L-homocysteine + H(+). It catalyses the reaction uridine(341) in tmRNA + S-adenosyl-L-methionine = 5-methyluridine(341) in tmRNA + S-adenosyl-L-homocysteine + H(+). In terms of biological role, dual-specificity methyltransferase that catalyzes the formation of 5-methyluridine at position 54 (m5U54) in all tRNAs, and that of position 341 (m5U341) in tmRNA (transfer-mRNA). The sequence is that of tRNA/tmRNA (uracil-C(5))-methyltransferase from Pseudomonas fluorescens (strain ATCC BAA-477 / NRRL B-23932 / Pf-5).